Reading from the N-terminus, the 106-residue chain is Large ribosomal subunit protein uL24 (106 aa).

It belongs to the universal ribosomal protein uL24 family. As to quaternary structure, part of the 50S ribosomal subunit.

In terms of biological role, one of two assembly initiator proteins, it binds directly to the 5'-end of the 23S rRNA, where it nucleates assembly of the 50S subunit. Functionally, one of the proteins that surrounds the polypeptide exit tunnel on the outside of the subunit. The polypeptide is Large ribosomal subunit protein uL24 (Erythrobacter litoralis (strain HTCC2594)).